A 289-amino-acid polypeptide reads, in one-letter code: ATP synthase subunit a (289 aa).

6 consecutive transmembrane segments (helical) span residues 43–63, 101–121, 160–180, 193–213, 232–252, and 259–279; these read AFHVDTLGWSVALGLIFVLIF, SAVIAPLALTIFVWVFLMNAV, LSVFALIIFYSIKVKGIGGFI, LFVQALLIPVNFLLEFVTLIA, VFILIAVMFGSGLLWLSGLGV, and AVFHILIITLQAFIFMMLTIV.

This sequence belongs to the ATPase A chain family. F-type ATPases have 2 components, CF(1) - the catalytic core - and CF(0) - the membrane proton channel. CF(1) has five subunits: alpha(3), beta(3), gamma(1), delta(1), epsilon(1). CF(0) has three main subunits: a(1), b(2) and c(9-12). The alpha and beta chains form an alternating ring which encloses part of the gamma chain. CF(1) is attached to CF(0) by a central stalk formed by the gamma and epsilon chains, while a peripheral stalk is formed by the delta and b chains.

The protein resides in the cell inner membrane. In terms of biological role, key component of the proton channel; it plays a direct role in the translocation of protons across the membrane. The chain is ATP synthase subunit a from Pseudomonas syringae pv. syringae (strain B728a).